Reading from the N-terminus, the 479-residue chain is uncharacterized protein (479 aa).

ATP is bound by residues 150–158 (TSGSTGKPK), D360, R375, and K462.

It belongs to the ATP-dependent AMP-binding enzyme family.

Its function is as follows. May be involved in fatty acid metabolism. This is an uncharacterized protein from Bacillus subtilis (strain 168).